A 1839-amino-acid polypeptide reads, in one-letter code: MAFQSALEALNSTTHRDASTNPILNSVVEPLRDSLSLYPWLLPKEAVPHLLSWGIPNSGLGVTPHPHPIHKTVETFLLFNHWHALARLPSTVMFMKPSKFQKLAALNPKFQELINFRLTAADTTRYPSTSLTFPSNSICFMHDALMYFSPAQIVDLFTQSPALETLYCSLIVPPESHFTDLSLFPEIYTYKISGQTLHYIPENHHSGSYNQPLQAPSWLKISSILSPSLALSVTKLESWGPVHSILIQRGLPPKPSLSARPPVLPNQPPRATTPNSQNQLLHQTSQLFFQLQQPQLSLVSFRIPDCVELPQATFLRQPLRHRLVPTSVYNALFTYTRAVRTLRTSDPAGFVRTQSNKPEHAWVTPNAWDNLQTLSVNAPHRPQVCYHFFSSPVARLKLHFAQHWRAYLLALTPFLTTSPLLLPLFNFNTPFPLPRLLSLFRRSVSSPRLLHSILPSQLRGAAIPNRPLPLWVTKLHHFLDSHSLLPTPPIRPRIELQRLPLMSLIPKPKIVLPLLSLLLSSPTIYIHFFQAQTPQQLHDNYHLHLHPSRFELSWTLQSYHVTQAQSFLPLLLPAPTQAQASNPAPRPPAFHAIPLPPQPSTSSSPPLQEPTLSPHLIHPPLTREPSPLNGCACDSALLPSTAAMTSAEHPTPLNPPTPSPTPDVPPPDSPGNPSLLKQVPPEANLHPIHNPDLPSSTTLPSGALTLVPAKTPSIYANPTPPSSHPFTPLADDPTAVGPCLPFHVLHPADYFPLSAEFLTRTRHVPPSSLSHPKLNCLLTCFSELSGHSESDLWLSLQSILPDSQLQNPEVSTLGLSTDILTALCFIYHSSVTLHAPSGVYHYGIASSSTVYVIHYQPGPPPHFSLSPRLAASAPRCNPTNSRLVRQALRFKLNGEFLPFTQAYAHESSITHAKNLISNMKNGFDGIMSSLTDSSKGPSPREKLTTLDSLIDVAAPREVSLIHIAGFAGCGKTHPIQKLLQTSPFHDFRISCPTNELRSEWKRDMQPTAENVWRFSTWESSLLKHSEILVIDEIYKLPRGYLDLSILADPTLSLVIILGDPLQGEYHSTSPHSSNHFLPSEVHRFKSYIDCYCFWSHRIPKQIASLFGVVCHNTNEGFVRALTSHPPNSKNLTNATNTALSLQQMGHHAITISARRVTFTEAHTILLDRHTNLLSPNNCLVALTRSRTGVYFVGNLHLASNSFGTNYMFSQALCQGTIDLNNVFPHIMPHLPKMYEPIRSRSNRFVSGSLNFRPTTNSRLLSSLTKPTHLPPHIPTNHSLDVLVSNPVLLGETLDPRLEVLHLPPTRLPLHLDLLPTVPSSSSFSSVDHLFPTPISPAICGYTFENLAAFFLPAHDPDLKEVLINDQKSNQFPYLDAPFELSCQPSSLLAPIHKPASDPTLLPGSIKKRLRFRASSSPYSITPSDQLLGQHLFSSLCLAYGRNPNSVLPFQPELFSECICINDYAQLSSKTQATIVANHQRSDPDWRLTAVRIFAKAQHKVNDASIFSGWKACQTLALMHGYIILVLGPVKKYQRIFDSKDRPPHIYYHCGKTPSQLSQWCQTHLSGSSYIANDYTAFDQSQHGEAVVLECLKMRRLSIPDSLIQLHSHLKCSVDTQFGPLTCMRLTGEPGTYDDNSDYNLAVIYSQYSLNGHPILISGDDSVLCGTPPPSPLWPTLKKMLHLRFKIERTSHPLFCGYYVSPHGAARNPYALFAKLMICVDDKSLHDKKLSYLSEFSTGHLAGDLVTSILPSHLLPYQSAVHDFFCRNCTPAEKILLSLDPIPESKILQLILKVRWASQAFFSYLPQKARELLVARSSLPSLYSNPKVSQLESELLPFSQ.

Residues 58–219 form the Alphavirus-like MT domain; the sequence is SGLGVTPHPH…NQPLQAPSWL (162 aa). Disordered stretches follow at residues 253-277, 578-623, and 645-703; these read PKPSLSARPPVLPNQPPRATTPNSQ, AQAS…PLTR, and TSAE…PSGA. Residues 584 to 599 show a composition bias toward pro residues; sequence APRPPAFHAIPLPPQP. The span at 600–614 shows a compositional bias: low complexity; sequence STSSSPPLQEPTLSP. The segment covering 652-670 has biased composition (pro residues); sequence PLNPPTPSPTPDVPPPDSP. One can recognise a Peptidase C21 domain in the interval 723 to 877; that stretch reads SHPFTPLADD…RLAASAPRCN (155 aa). Catalysis depends on for protease activity residues Cys-776 and His-862. The (+)RNA virus helicase ATP-binding domain maps to 935 to 1092; that stretch reads KGPSPREKLT…RFKSYIDCYC (158 aa). 965–972 is an ATP binding site; the sequence is GFAGCGKT. Residues 1093-1224 enclose the (+)RNA virus helicase C-terminal domain; the sequence is FWSHRIPKQI…GTIDLNNVFP (132 aa). One can recognise a RdRp catalytic domain in the interval 1567 to 1673; it reads SSYIANDYTA…CGTPPPSPLW (107 aa).

This sequence belongs to the Tymoviridae non-structural replication polyprotein family. In terms of processing, specific enzymatic cleavages by the host yield mature proteins.

The catalysed reaction is RNA(n) + a ribonucleoside 5'-triphosphate = RNA(n+1) + diphosphate. Acts as a cysteine protease, methyltransferase and deubiquitinase. The cysteine protease activity cleaves the polyprotein giving rise to mature proteins. The methyltransferase domain is probably involved in viral RNA capping. Functionally, RNA-directed RNA polymerase is responsible for the replication and transcription of the genome. The polypeptide is Non-structural replication polyprotein (Solanum lycopersicum (Tomato)).